Reading from the N-terminus, the 72-residue chain is Large ribosomal subunit protein bL31 (72 aa).

Positions 16, 18, 36, and 39 each coordinate Zn(2+).

This sequence belongs to the bacterial ribosomal protein bL31 family. Type A subfamily. In terms of assembly, part of the 50S ribosomal subunit. Zn(2+) is required as a cofactor.

In terms of biological role, binds the 23S rRNA. The polypeptide is Large ribosomal subunit protein bL31 (Geobacter sp. (strain M21)).